The primary structure comprises 319 residues: Ribosomal RNA small subunit methyltransferase H (319 aa).

Residues 39 to 41 (GGH), D59, F83, D104, and Q111 each bind S-adenosyl-L-methionine.

This sequence belongs to the methyltransferase superfamily. RsmH family.

Its subcellular location is the cytoplasm. It catalyses the reaction cytidine(1402) in 16S rRNA + S-adenosyl-L-methionine = N(4)-methylcytidine(1402) in 16S rRNA + S-adenosyl-L-homocysteine + H(+). In terms of biological role, specifically methylates the N4 position of cytidine in position 1402 (C1402) of 16S rRNA. This Ralstonia pickettii (strain 12D) protein is Ribosomal RNA small subunit methyltransferase H.